Reading from the N-terminus, the 601-residue chain is Tripeptidyl-peptidase SED4 (601 aa).

A signal peptide spans 1-22 (MVSFTLRAIGACLVSLPALVTA). A propeptide spans 23–202 (APTSHISGDF…SVFTSDLEIT (180 aa)) (removed in mature form). Residues Asn-210 and Asn-281 are each glycosylated (N-linked (GlcNAc...) asparagine). In terms of domain architecture, Peptidase S53 spans 212–601 (TITPDCIRDL…ETLSKLVLQY (390 aa)). Residues Glu-288 and Asp-292 each act as charge relay system in the active site. Asn-323 is a glycosylation site (N-linked (GlcNAc...) asparagine). The active-site Charge relay system is the Ser-504. 2 residues coordinate Ca(2+): Asp-546 and Ile-547. An N-linked (GlcNAc...) asparagine glycan is attached at Asn-575. Positions 579 and 581 each coordinate Ca(2+).

The cofactor is Ca(2+).

Its subcellular location is the secreted. It localises to the extracellular space. It carries out the reaction Release of an N-terminal tripeptide from a polypeptide.. Secreted tripeptidyl-peptidase which degrades proteins at acidic pHs and is involved in virulence. This chain is Tripeptidyl-peptidase SED4 (SED4), found in Arthroderma otae (strain ATCC MYA-4605 / CBS 113480) (Microsporum canis).